The chain runs to 344 residues: L-sulfolactate dehydrogenase (344 aa).

It belongs to the LDH2/MDH2 oxidoreductase family.

The protein resides in the cytoplasm. It catalyses the reaction a (2S)-2-hydroxycarboxylate + NAD(+) = a 2-oxocarboxylate + NADH + H(+). The protein operates within cofactor biosynthesis; coenzyme M biosynthesis; sulfoacetaldehyde from phosphoenolpyruvate and sulfite: step 3/4. Its pathway is cofactor biosynthesis; 5,6,7,8-tetrahydromethanopterin biosynthesis. Functionally, catalyzes the reduction of sulfopyruvate to (R)-sulfolactate much more efficiently than the reverse reaction. Also catalyzes the reduction of oxaloacetate, alpha-ketoglutarate, and to a much lower extent, KHTCA, but not pyruvate. Involved in the biosynthesis of both coenzyme M (with (R)-sulfolactate) and methanopterin (with alpha-ketoglutarate). The chain is L-sulfolactate dehydrogenase (comC) from Methanocaldococcus jannaschii (strain ATCC 43067 / DSM 2661 / JAL-1 / JCM 10045 / NBRC 100440) (Methanococcus jannaschii).